The sequence spans 424 residues: Serine--tRNA ligase (424 aa).

232 to 234 lines the L-serine pocket; the sequence is TAE. 263–265 contributes to the ATP binding site; it reads RRE. Glutamate 286 contributes to the L-serine binding site. 350–353 contacts ATP; it reads EISS. L-serine is bound at residue serine 384.

This sequence belongs to the class-II aminoacyl-tRNA synthetase family. Type-1 seryl-tRNA synthetase subfamily. As to quaternary structure, homodimer. The tRNA molecule binds across the dimer.

The protein resides in the cytoplasm. It carries out the reaction tRNA(Ser) + L-serine + ATP = L-seryl-tRNA(Ser) + AMP + diphosphate + H(+). The catalysed reaction is tRNA(Sec) + L-serine + ATP = L-seryl-tRNA(Sec) + AMP + diphosphate + H(+). It functions in the pathway aminoacyl-tRNA biosynthesis; selenocysteinyl-tRNA(Sec) biosynthesis; L-seryl-tRNA(Sec) from L-serine and tRNA(Sec): step 1/1. Its function is as follows. Catalyzes the attachment of serine to tRNA(Ser). Is also able to aminoacylate tRNA(Sec) with serine, to form the misacylated tRNA L-seryl-tRNA(Sec), which will be further converted into selenocysteinyl-tRNA(Sec). The sequence is that of Serine--tRNA ligase from Prochlorococcus marinus subsp. pastoris (strain CCMP1986 / NIES-2087 / MED4).